The chain runs to 560 residues: Thermosome subunit 1 (560 aa).

The tract at residues 525 to 550 is disordered; sequence LSGGQTGSDDDDGGAPGGMGGGMGGM. Residues 538 to 550 are compositionally biased toward gly residues; that stretch reads GAPGGMGGGMGGM.

Belongs to the TCP-1 chaperonin family. The thermosome or CCT complex is a oligomeric complex of two octameric double-ring structures; the complex is probably a heterooligomer of CCT1, CCT2 and CCT3 with yet unknown stoichiometry.

Functionally, molecular chaperone that assists in the folding or refolding of nascent or denatured proteins along with ATP hydrolysis. ATPase activity is highest in thermosome assemblies containing CCT1:CCT2, followed by assemblies containing CCT1:CCT2:CCT3. Required for thermosome ATPase activity. Not required for growth. The chain is Thermosome subunit 1 (cct1) from Haloferax volcanii (strain ATCC 29605 / DSM 3757 / JCM 8879 / NBRC 14742 / NCIMB 2012 / VKM B-1768 / DS2) (Halobacterium volcanii).